We begin with the raw amino-acid sequence, 1033 residues long: MAPRLQLEKAAWRWTETVPPEAVTQEHIEAAYRVGLEPCQRGTCRRNCRGNPNCLVGIGEHVWLGEIDENSFHNIDDPNCERRKKNAFVGLTNLGATCYVNTFLQMWFLNLELRQALYLCSSNEHAAGESIPKDKDYEPQTICEHLQYLFALLQNSKRRYIDPSGFVKALGLDTGQQQDAQEFSKLFMSLLEDTLSKQKNPDVRNIVQKQFCGEYAYVTVCNQCGRESKLVSKFYELELNIQGHKQLTDCITEFLKEEKLEGDNRYFCETCQSKQNATRKIRLLSLPCTLNLQLMRFVFDRQTGHKKKLNTYIGFSELLDMEPFMEQKNGVYVYELSAVLIHRGVSAYSGHYIAHVKDPQTGEWYKFNDEDIEKMEGKKLQLGIEEDLAEPSKSQTRKPKCGKGTHCSRNAYMLVYRLQTREKSLTVEVPAFLQELVERDNCKFEEWCNEMAEMRKQSVARGKIKHEEVKELYQRLPAEAGSPYDFISLEWLQKWLDESTPPKPIDNTACLCSHGKLHPDKICIMKRISEYVADFFYRRYGGGPRLNVKALCKDCVVERCRILRLKNQLNEDYKTVTNLLKITVKGSEGFWVGKASLRSWRQLALEQLNEQDEDAEHSNGKLNGNAPNKDEVNEEKREEEEELNFNEDIVCPHGDLCISENERRVVSKEAWKKLKQYFPKAPEFPSNKECCSQCKILEREGEENEALHKMMASEQKTSLQNLFHDKCRPCLGSWPQETDELYIVSQFFVEEWRKFVRRPTRCSPVSSLGNSALLCPHGGLMFTYASMTKEDSKLIALIWPSEWERIQKLFVVDHVIKITRTRAAGEPESALYSSEPQLCPECRGGLLCQQQRDLREYTQATIYIHKVVDNKKVMKDAAPELNVSSSEAEEEREENKPEGEQDPDFNQSNGGAKRQKLSHQSYISYQKQGIRRSTRHRKVRGEKALLVSANQTLKELKIQIMHAFSVAPFDQNLLIDGKILSDDTATLGSLGIIPESVILLKADEPIADYAAMDDVMQVCMPEEGFKGTGLLGH.

One can recognise a USP domain in the interval 89-419 (VGLTNLGATC…NAYMLVYRLQ (331 aa)). The Nucleophile role is filled by Cys98. Catalysis depends on His351, which acts as the Proton acceptor. DUSP domains follow at residues 457-552 (QSVA…KALC), 567-690 (NQLN…NKEC), and 710-823 (MMAS…RTRA). The interval 610-639 (EQDEDAEHSNGKLNGNAPNKDEVNEEKREE) is disordered. The disordered stretch occupies residues 878-920 (APELNVSSSEAEEEREENKPEGEQDPDFNQSNGGAKRQKLSHQ). The 77-residue stretch at 931–1007 (RRSTRHRKVR…ILLKADEPIA (77 aa)) folds into the Ubiquitin-like domain.

This sequence belongs to the peptidase C19 family.

It localises to the cytoplasm. Its subcellular location is the nucleus. The enzyme catalyses Thiol-dependent hydrolysis of ester, thioester, amide, peptide and isopeptide bonds formed by the C-terminal Gly of ubiquitin (a 76-residue protein attached to proteins as an intracellular targeting signal).. Recognizes and hydrolyzes the peptide bond at the C-terminal Gly of ubiquitin. Involved in the processing of poly-ubiquitin precursors as well as that of ubiquitinated proteins. The protein is Ubiquitin carboxyl-terminal hydrolase 48 (USP48) of Gallus gallus (Chicken).